Reading from the N-terminus, the 560-residue chain is Probable sulfate transporter MT1781 (560 aa).

Transmembrane regions (helical) follow at residues 29-49 (VLAG…YATV), 51-71 (GLPP…YALL), 79-99 (IGPE…MAAG), 105-125 (AVLA…AGTA), 138-158 (VLVG…LGTI), 184-204 (WPTF…TRWA), 207-227 (APGP…MSLD), 256-276 (ALII…VLTA), 333-353 (LIAL…LAMF), 355-375 (IAAL…LSEF), and 394-414 (AAVL…LSIL). Residues 442–557 (DYPQAKRVPG…MTLPTAVQAF (116 aa)) form the STAS domain.

It belongs to the SLC26A/SulP transporter (TC 2.A.53) family.

It localises to the cell membrane. The chain is Probable sulfate transporter MT1781 from Mycobacterium tuberculosis (strain CDC 1551 / Oshkosh).